The following is a 403-amino-acid chain: Aminomethyltransferase, mitochondrial (403 aa).

The transit peptide at 1–28 directs the protein to the mitochondrion; it reads MQRAMTVVPHLGLRLQALPLALGRPLSR. Residues glutamate 232, arginine 261, and tyrosine 399 each coordinate substrate.

This sequence belongs to the GcvT family. The glycine cleavage system is composed of four proteins: P, T, L and H.

The protein localises to the mitochondrion. The enzyme catalyses N(6)-[(R)-S(8)-aminomethyldihydrolipoyl]-L-lysyl-[protein] + (6S)-5,6,7,8-tetrahydrofolate = N(6)-[(R)-dihydrolipoyl]-L-lysyl-[protein] + (6R)-5,10-methylene-5,6,7,8-tetrahydrofolate + NH4(+). The glycine cleavage system catalyzes the degradation of glycine. The polypeptide is Aminomethyltransferase, mitochondrial (Canis lupus familiaris (Dog)).